We begin with the raw amino-acid sequence, 388 residues long: MAAINVIFISGAIALFALTGSCSESTNPFTNKPYATQNPYSPPQTNQPTKRPYQPGPAPTPAPYIPQKTNPPTKRPLNPTPSPTAKPPSENSESENSEGPVLIEEDHFTVDANFKCGIPPVEPDLKKGKIVGGAEAVPNSWPYAAAFGTYDISGGKLEVSQMCGSTIITPRHALTAAHCFMMDPDIDQTYYIFMGLHDETTYKGVRPNKIVGVRYHPKTNVFTDDPWLVYDFAILTLRKKVIANFAWNYACLPQPKKIPPEGTICWSVGWGVTQNTGGDNVLKQVAIDLVSEKRCKEEYRSTITSKSTICGGTTPGQDTCQGDSGGPLFCKEDGKWYLQGIVSYGPSVCGSGPMAAYAAVAYNLEWLCCYMPNLPSCEDIECDESGEN.

Positions 1–22 (MAAINVIFISGAIALFALTGSC) are cleaved as a signal peptide. Over residues 29–49 (FTNKPYATQNPYSPPQTNQPT) the composition is skewed to polar residues. The disordered stretch occupies residues 29–98 (FTNKPYATQN…SENSESENSE (70 aa)). Positions 54–64 (QPGPAPTPAPY) are enriched in pro residues. 5 disulfides stabilise this stretch: cysteine 116–cysteine 251, cysteine 163–cysteine 179, cysteine 265–cysteine 330, cysteine 295–cysteine 310, and cysteine 320–cysteine 349. The 243-residue stretch at 130–372 (IVGGAEAVPN…NLEWLCCYMP (243 aa)) folds into the Peptidase S1 domain. Residues histidine 178 and aspartate 231 each act as charge relay system in the active site. The active-site Charge relay system is serine 324.

This sequence belongs to the peptidase S1 family. Heterodimer of a heavy chain and either an L1 light chain or an L2 light chain linked by a disulfide bond. Detected in sperm, but not in unfertilized eggs (at protein level). Expressed in gonad, but not in hepatopancreas, intestine or branchial basket.

It localises to the secreted. It carries out the reaction Hydrolyzes arginyl bonds, preferably with Pro in the P2 position.. Its activity is regulated as follows. Inhibited by peptidyl-argininals with Pro in the P2 position, diisopropyl fluorophosphate, phenylmethanesulfonyl fluoride, leupeptin, antipain, soybean trypsin inhibitor, aprotinin, ovomucoid, valyl-prolyl-arginyl-chloromethane, glycyl-valyl-arginyl-chloromethane, p-aminobenzamidine, benzamidine, zinc chloride and mercuric chloride. In terms of biological role, trypsin-like protease with a narrow substrate specificity. Preferentially hydrolyzes substrates with Pro in the P2 position and Val in the P3 position. Plays a role in fertilization. The chain is Spermosin from Halocynthia roretzi (Sea squirt).